The following is a 505-amino-acid chain: Glutamate--tRNA ligase (505 aa).

The 'HIGH' region signature appears at 12–22; it reads PSPTGALHIGG. A 'KMSKS' region motif is present at residues 260–264; the sequence is KLSKR. Lys-263 serves as a coordination point for ATP.

The protein belongs to the class-I aminoacyl-tRNA synthetase family. Glutamate--tRNA ligase type 1 subfamily. As to quaternary structure, monomer.

It localises to the cytoplasm. It catalyses the reaction tRNA(Glu) + L-glutamate + ATP = L-glutamyl-tRNA(Glu) + AMP + diphosphate. Its function is as follows. Catalyzes the attachment of glutamate to tRNA(Glu) in a two-step reaction: glutamate is first activated by ATP to form Glu-AMP and then transferred to the acceptor end of tRNA(Glu). This chain is Glutamate--tRNA ligase, found in Bacteroides fragilis (strain ATCC 25285 / DSM 2151 / CCUG 4856 / JCM 11019 / LMG 10263 / NCTC 9343 / Onslow / VPI 2553 / EN-2).